Here is a 71-residue protein sequence, read N- to C-terminus: Large ribosomal subunit protein eL38 (71 aa).

Belongs to the eukaryotic ribosomal protein eL38 family.

This Ixodes scapularis (Black-legged tick) protein is Large ribosomal subunit protein eL38 (RpL38).